The chain runs to 166 residues: Transcriptional repressor NrdR (166 aa).

Residues 3–34 (CPHCHHNGSRVVDSRPTDDGRVIRRRRECESC) fold into a zinc finger. The ATP-cone domain occupies 49–139 (LLVIKKNGTR…VYRQFKDTGV (91 aa)).

It belongs to the NrdR family. It depends on Zn(2+) as a cofactor.

In terms of biological role, negatively regulates transcription of bacterial ribonucleotide reductase nrd genes and operons by binding to NrdR-boxes. This Levilactobacillus brevis (strain ATCC 367 / BCRC 12310 / CIP 105137 / JCM 1170 / LMG 11437 / NCIMB 947 / NCTC 947) (Lactobacillus brevis) protein is Transcriptional repressor NrdR.